The following is a 141-amino-acid chain: Small ribosomal subunit protein bS6 (141 aa).

The segment at 96–141 (VTGQSEMLKAEENRSERRERRERPEHADSAEGDDSNDSDSSDNADE) is disordered. The span at 103-124 (LKAEENRSERRERRERPEHADS) shows a compositional bias: basic and acidic residues. Residues 125–141 (AEGDDSNDSDSSDNADE) are compositionally biased toward acidic residues.

It belongs to the bacterial ribosomal protein bS6 family.

Functionally, binds together with bS18 to 16S ribosomal RNA. This Pseudomonas putida (strain ATCC 700007 / DSM 6899 / JCM 31910 / BCRC 17059 / LMG 24140 / F1) protein is Small ribosomal subunit protein bS6.